The chain runs to 218 residues: Small ribosomal subunit protein uS3 (218 aa).

Positions 38 to 106 constitute a KH type-2 domain; the sequence is IREYISKRLS…RVHINILEIK (69 aa).

This sequence belongs to the universal ribosomal protein uS3 family. As to quaternary structure, part of the 30S ribosomal subunit. Forms a tight complex with proteins S10 and S14.

Its function is as follows. Binds the lower part of the 30S subunit head. Binds mRNA in the 70S ribosome, positioning it for translation. The chain is Small ribosomal subunit protein uS3 from Bacillus subtilis (strain 168).